A 566-amino-acid chain; its full sequence is Alpha-amylase (566 aa).

The signal sequence occupies residues 1-28 (MARRLATASLAVLAAAATALTAPTPAAA). Asparagine 120, glutamine 166, and aspartate 175 together coordinate Ca(2+). The active-site Nucleophile is aspartate 205. Histidine 209 lines the Ca(2+) pocket. The active-site Proton donor is glutamate 232. A CBM20 domain is found at 465–566 (GPGTGQTSAS…ALTLNDTWRG (102 aa)).

It belongs to the glycosyl hydrolase 13 family. In terms of assembly, monomer. Ca(2+) serves as cofactor.

The catalysed reaction is Endohydrolysis of (1-&gt;4)-alpha-D-glucosidic linkages in polysaccharides containing three or more (1-&gt;4)-alpha-linked D-glucose units.. This chain is Alpha-amylase (amy), found in Streptomyces griseus.